Consider the following 361-residue polypeptide: UDP-3-O-acylglucosamine N-acyltransferase (361 aa).

The active-site Proton acceptor is the histidine 253.

Belongs to the transferase hexapeptide repeat family. LpxD subfamily. As to quaternary structure, homotrimer.

The catalysed reaction is a UDP-3-O-[(3R)-3-hydroxyacyl]-alpha-D-glucosamine + a (3R)-hydroxyacyl-[ACP] = a UDP-2-N,3-O-bis[(3R)-3-hydroxyacyl]-alpha-D-glucosamine + holo-[ACP] + H(+). It participates in bacterial outer membrane biogenesis; LPS lipid A biosynthesis. Its function is as follows. Catalyzes the N-acylation of UDP-3-O-acylglucosamine using 3-hydroxyacyl-ACP as the acyl donor. Is involved in the biosynthesis of lipid A, a phosphorylated glycolipid that anchors the lipopolysaccharide to the outer membrane of the cell. This chain is UDP-3-O-acylglucosamine N-acyltransferase, found in Burkholderia thailandensis (strain ATCC 700388 / DSM 13276 / CCUG 48851 / CIP 106301 / E264).